Here is a 359-residue protein sequence, read N- to C-terminus: Homoserine dehydrogenase (359 aa).

The NAD(+) site is built by alanine 13, valine 15, valine 16, and alanine 41. Residue valine 16 coordinates NADP(+). An NADPH-binding site is contributed by valine 16. 4 residues coordinate NADPH: lysine 60, threonine 93, serine 94, and lysine 117. NAD(+) is bound at residue threonine 93. An NADP(+)-binding site is contributed by threonine 93. Lysine 117 is an NADP(+) binding site. Positions 143, 146, 148, and 150 each coordinate Na(+). 2 residues coordinate NADP(+): glycine 205 and glutamate 208. The L-homoserine site is built by glutamate 208 and aspartate 219. Lysine 223 serves as the catalytic Proton donor. Residue lysine 290 forms a Glycyl lysine isopeptide (Lys-Gly) (interchain with G-Cter in ubiquitin) linkage. NAD(+) is bound at residue glycine 340. An NADP(+)-binding site is contributed by glycine 340. NADPH is bound at residue glycine 340.

Belongs to the homoserine dehydrogenase family. Homodimer. Requires a metal cation as cofactor.

The catalysed reaction is L-homoserine + NADP(+) = L-aspartate 4-semialdehyde + NADPH + H(+). It catalyses the reaction L-homoserine + NAD(+) = L-aspartate 4-semialdehyde + NADH + H(+). The protein operates within amino-acid biosynthesis; L-methionine biosynthesis via de novo pathway; L-homoserine from L-aspartate: step 3/3. It participates in amino-acid biosynthesis; L-threonine biosynthesis; L-threonine from L-aspartate: step 3/5. Catalyzes the conversion of L-aspartate-beta-semialdehyde (L-Asa) to L-homoserine (L-Hse), the third step in the biosynthesis of amino acids that derive from aspartate (the aspartate family of amino acids), including methioinine and threonine, the latter of which is a precursor to isoleucine; production of homoserine leads to a branch-point in the pathway as it can either be O-phosphorylated for processing to threonine, or O-acylated for processing to methionine. In Saccharomyces cerevisiae (strain ATCC 204508 / S288c) (Baker's yeast), this protein is Homoserine dehydrogenase (HOM6).